A 198-amino-acid chain; its full sequence is Transcription factor BHLH133 (198 aa).

The basic motif; degenerate stretch occupies residues 114–127 (SAESSQSYYAKNRR). In terms of domain architecture, bHLH spans 114-163 (SAESSQSYYAKNRRQRINERLRILQELIPNGTKVDISTMLEEAIQYVKFL). Residues 128–163 (QRINERLRILQELIPNGTKVDISTMLEEAIQYVKFL) form a helix-loop-helix motif region.

The protein belongs to the bHLH protein family.

Its subcellular location is the nucleus. Transcription factor that acts as a regulator of iron homeostasis. May act as negative regulator of iron transportation from root to shoot. Does not seem to be involved in the suppression of the induction of iron deficiency responsive genes. In Oryza sativa subsp. japonica (Rice), this protein is Transcription factor BHLH133.